Consider the following 733-residue polypeptide: Ribosomal protein S6 kinase 2 alpha (733 aa).

A disordered region spans residues glutamate 18 to glutamate 38. Positions phenylalanine 62–phenylalanine 321 constitute a Protein kinase 1 domain. Residues leucine 68–valine 76 and lysine 94 contribute to the ATP site. The Proton acceptor role is filled by aspartate 187. Serine 221 bears the Phosphoserine mark. One can recognise an AGC-kinase C-terminal domain in the interval serine 322–alanine 391. A Phosphothreonine modification is found at threonine 359. Phosphoserine is present on serine 363. A Phosphoserine; by autocatalysis modification is found at serine 380. One can recognise a Protein kinase 2 domain in the interval tyrosine 416 to isoleucine 673. ATP is bound by residues isoleucine 422–cysteine 430 and lysine 445. The active-site Proton acceptor is aspartate 533. Phosphothreonine is present on threonine 571. A Phosphoserine modification is found at serine 730.

It belongs to the protein kinase superfamily. AGC Ser/Thr protein kinase family. S6 kinase subfamily. Requires Mg(2+) as cofactor. In terms of processing, autophosphorylated on Ser-380, as part of the activation process.

The catalysed reaction is L-seryl-[protein] + ATP = O-phospho-L-seryl-[protein] + ADP + H(+). It carries out the reaction L-threonyl-[protein] + ATP = O-phospho-L-threonyl-[protein] + ADP + H(+). Its activity is regulated as follows. Activated by multiple phosphorylations on threonine and serine residues. Its function is as follows. Serine/threonine kinase that may play a role in mediating the growth-factor and stress induced activation of transcription. The polypeptide is Ribosomal protein S6 kinase 2 alpha (rps6ka) (Xenopus laevis (African clawed frog)).